The sequence spans 1028 residues: Collagen alpha-1(VI) chain (1028 aa).

Residues 1-19 (MRAARALLPLLLQACWTAA) form the signal peptide. Residues 20–256 (QDEPETPRAV…CCSFECQPAR (237 aa)) form an N-terminal globular domain region. One can recognise a VWFA 1 domain in the interval 37 to 235 (DLFFVLDTSE…EAISQTIDTI (199 aa)). The N-linked (GlcNAc...) asparagine glycan is linked to asparagine 212. The interval 254–590 (PARGPPGLRG…GPPGHQGPPG (337 aa)) is disordered. A triple-helical region region spans residues 257 to 592 (GPPGLRGDPG…PGHQGPPGPD (336 aa)). Positions 262-264 (RGD) match the Cell attachment site motif. Basic and acidic residues-rich tracts occupy residues 268 to 285 (EGERGKPGLPGEKGEAGD) and 301 to 334 (KGEKGSRGEKGSRGPKGYKGEKGKRGIDGVDGVK). The span at 384–394 (RPGSSGPSGDE) shows a compositional bias: low complexity. A Cell attachment site motif is present at residues 442 to 444 (RGD). The span at 457-471 (EGPVGVPGDPGEAGP) shows a compositional bias: low complexity. The short motif at 478–480 (RGD) is the Cell attachment site element. The segment covering 483–493 (PPGSEGARGAP) has biased composition (low complexity). Residues asparagine 516 and asparagine 537 are each glycosylated (N-linked (GlcNAc...) asparagine). Positions 550–560 (GEAGDPGDDNN) are enriched in acidic residues. Over residues 579 to 590 (PQGPPGHQGPPG) the composition is skewed to pro residues. The tract at residues 593–1028 (ECEILDIIMK…QTVSRKVALG (436 aa)) is C-terminal globular domain. 2 consecutive VWFA domains span residues 615–805 (DLLF…LKNV) and 829–1021 (DITI…HQTV). Asparagine 804 and asparagine 896 each carry an N-linked (GlcNAc...) asparagine glycan.

It belongs to the type VI collagen family. As to quaternary structure, trimers composed of three different chains: alpha-1(VI), alpha-2(VI), and alpha-3(VI) or alpha-5(VI) or alpha-6(VI). Prolines at the third position of the tripeptide repeating unit (G-X-Y) are hydroxylated in some or all of the chains.

It is found in the secreted. The protein resides in the extracellular space. Its subcellular location is the extracellular matrix. In terms of biological role, collagen VI acts as a cell-binding protein. The polypeptide is Collagen alpha-1(VI) chain (COL6A1) (Homo sapiens (Human)).